We begin with the raw amino-acid sequence, 37 residues long: Large ribosomal subunit protein bL36c (37 aa).

The protein belongs to the bacterial ribosomal protein bL36 family.

The protein localises to the plastid. The protein resides in the chloroplast. This chain is Large ribosomal subunit protein bL36c, found in Lactuca sativa (Garden lettuce).